The primary structure comprises 300 residues: Mycothiol acetyltransferase (300 aa).

2 consecutive N-acetyltransferase domains span residues 4–140 (IDWR…RPLT) and 151–300 (VRLA…AVAD). D36 is a 1D-myo-inositol 2-(L-cysteinylamino)-2-deoxy-alpha-D-glucopyranoside binding site. 79-81 (LVV) serves as a coordination point for acetyl-CoA. Residues E178, K219, and E227 each coordinate 1D-myo-inositol 2-(L-cysteinylamino)-2-deoxy-alpha-D-glucopyranoside. 231–233 (VGV) serves as a coordination point for acetyl-CoA. Y269 is a binding site for 1D-myo-inositol 2-(L-cysteinylamino)-2-deoxy-alpha-D-glucopyranoside. Acetyl-CoA is bound at residue 274 to 279 (NGAAVK).

Belongs to the acetyltransferase family. MshD subfamily. Monomer.

The catalysed reaction is 1D-myo-inositol 2-(L-cysteinylamino)-2-deoxy-alpha-D-glucopyranoside + acetyl-CoA = mycothiol + CoA + H(+). In terms of biological role, catalyzes the transfer of acetyl from acetyl-CoA to desacetylmycothiol (Cys-GlcN-Ins) to form mycothiol. This chain is Mycothiol acetyltransferase, found in Mycobacterium sp. (strain MCS).